Here is a 323-residue protein sequence, read N- to C-terminus: Cuticle collagen 39 (323 aa).

Positions 1 to 28 are cleaved as a signal peptide; the sequence is MTGPTCLAVVAGISGVFVFGALFSVAQI. The span at 80-89 shows a compositional bias: polar residues; sequence QCNCGPQASN. Positions 80–293 are disordered; sequence QCNCGPQASN…GAAEQGYRHR (214 aa). 3 triple-helical region regions span residues 93-125, 138-200, and 203-265; these read GPPG…AGPK, GSPG…GGQR, and GLPG…PGAD. A compositionally biased stretch (gly residues) spans 108–117; that stretch reads GQPGGAGNPG. The span at 136–146 shows a compositional bias: low complexity; sequence PAGSPGPAGAP. Residues 159 to 168 show a composition bias toward gly residues; it reads GHPGQGGSQG. Positions 169–191 are enriched in low complexity; the sequence is PAGPRGPAGDAGAPGQVGAPGNP. Residues 224–233 show a composition bias toward gly residues; the sequence is GQSGGQGQQG. Low complexity predominate over residues 234–267; the sequence is PAGPAGPDGQPGQPGQDGQAGAPGNDGAPGADAA.

The protein belongs to the cuticular collagen family. As to quaternary structure, collagen polypeptide chains are complexed within the cuticle by disulfide bonds and other types of covalent cross-links.

Its function is as follows. Nematode cuticles are composed largely of collagen-like proteins. The cuticle functions both as an exoskeleton and as a barrier to protect the worm from its environment. The protein is Cuticle collagen 39 (col-39) of Caenorhabditis elegans.